Reading from the N-terminus, the 464-residue chain is MSMSSSNITSGFIDIATFDEIEKYMYGGPTATAYFVREIRKSTWFTQVPVPLSRNTGNAAFGQEWSVSISRAGDYLLQTWLRVNIPPVTLSGLLGNTYSLRWTKNLMHNLIREATITFNDLVAARFDNYHLDFWSAFTVPASKRNGYDNMIGNVSSLINPVAPGGTLGSVGGINLNLPLPFFFSRDTGVALPTAALPYNEMQINFNFRDWHELLILTNSALVPPASPYVPIVVGTHISAAPVLGPVQVWANYAIVSNEERRRMGCAIRDILIEQVQTAPRQNYVPLTNASPTFDIRFSHAIKALFFAVRNKTSAAEWSNYATSSPVVTGATVNYEPTGSFDPIANTTLIYENTNRLGAMGSDYFSLINPFYHAPTIPSFIGYHLYSYSLHFYDLDPMGSTNYGKLTNVSVVPQASPAAIAAAGGTGGQAGSDYPQNYEFVILAVNNNIVRISGGETPQNYIAVC.

This sequence belongs to the NCLDV major capsid protein family. As to quaternary structure, homotrimer. The N-terminus is blocked.

Its subcellular location is the virion. Its function is as follows. Major capsid protein that self assembles to form an icosahedral capsid. Represents around 50% of the total virion protein mass. This chain is Major capsid protein (MCP), found in Tipula (TIV).